We begin with the raw amino-acid sequence, 456 residues long: Alcohol acyltransferase 1 (456 aa).

Active-site proton acceptor residues include H166 and D382.

It belongs to the plant acyltransferase family.

Involved in the biosynthesis of volatile esters which confer kiwifruit flavor. Alcohol acyl transferase that can use a wide range of alcohols as substrate to produce esters. The sequence is that of Alcohol acyltransferase 1 from Actinidia chinensis var. chinensis (Chinese soft-hair kiwi).